The primary structure comprises 322 residues: DNA repair and recombination protein RadA (322 aa).

An ATP-binding site is contributed by 105 to 112 (GMYGSGKT).

This sequence belongs to the eukaryotic RecA-like protein family.

In terms of biological role, involved in DNA repair and in homologous recombination. Binds and assemble on single-stranded DNA to form a nucleoprotein filament. Hydrolyzes ATP in a ssDNA-dependent manner and promotes DNA strand exchange between homologous DNA molecules. The chain is DNA repair and recombination protein RadA from Methanococcus maripaludis (strain C5 / ATCC BAA-1333).